The primary structure comprises 457 residues: D-xylose transporter (457 aa).

10 helical membrane-spanning segments follow: residues 14–34 (ALGG…ILFI), 46–66 (GWVV…IGPS), 81–101 (IIFF…TLII), 104–124 (IILG…LAEL), 131–151 (GTVS…AYIT), 164–184 (WMLG…LILP), 244–264 (LIIG…TVLY), 281–301 (LLAH…AVAI), 309–329 (KIVN…SIGM), and 338–358 (AAII…ATWG). Gln-138 contributes to the beta-D-xylose binding site. Residues 254 to 255 (QQ) and Asn-260 contribute to the beta-D-xylose site. Residues Trp-362 and Asn-385 each coordinate beta-D-xylose. 2 helical membrane-spanning segments follow: residues 380–400 (FASV…PSLL) and 402–422 (FFGT…SIWF).

It belongs to the major facilitator superfamily. Sugar transporter (TC 2.A.1.1) family.

It is found in the cell membrane. With respect to regulation, transport is inhibited by 6-deoxy-D-glucose. Its function is as follows. Uptake of D-xylose across the boundary membrane with the concomitant transport of protons into the cell (symport system). Transport is driven by the proton motive force generated by either malolactic fermentation or by the metabolism of D-glucose. This is D-xylose transporter from Levilactobacillus brevis (Lactobacillus brevis).